The chain runs to 158 residues: Protein Smg homolog (158 aa).

Belongs to the Smg family.

This Alteromonas mediterranea (strain DSM 17117 / CIP 110805 / LMG 28347 / Deep ecotype) protein is Protein Smg homolog.